A 64-amino-acid polypeptide reads, in one-letter code: Micrurotoxin 2 (64 aa).

Cystine bridges form between Cys3–Cys24, Cys6–Cys11, Cys17–Cys41, Cys45–Cys57, and Cys58–Cys63.

This sequence belongs to the three-finger toxin family. Ancestral subfamily. Expressed by the venom gland.

The protein resides in the secreted. In terms of biological role, allosteric modulator of the GABA(A) receptor (GABR), possibly increasing receptor affinity for the agonist, thus enhancing receptor opening and macroscopic desensitization. In vivo, intracerebroventricular injection into mice results in periods of reduced basal activity, followed by bursts of intense seizures and death. This is Micrurotoxin 2 from Micrurus mipartitus (Red-tailed coral snake).